The chain runs to 258 residues: Regulatory protein RecX (258 aa).

The protein belongs to the RecX family.

Its subcellular location is the cytoplasm. Its function is as follows. Modulates RecA activity. This is Regulatory protein RecX from Streptococcus pneumoniae (strain 70585).